Reading from the N-terminus, the 628-residue chain is ATP-dependent zinc metalloprotease FtsH 4 (628 aa).

Residues 1 to 14 (MAIKPQPQWQRRLA) lie on the Cytoplasmic side of the membrane. Residues 15-35 (SVLLWGSTIYLLVNLLAPALF) form a helical membrane-spanning segment. Over 36–119 (RSQPPQVPYS…AAAPPAKNSW (84 aa)) the chain is Lumenal. Residues 120–140 (FGTLLSWVIPPLIFVGIWSFF) form a helical membrane-spanning segment. Residues 141-628 (LNRNNNGAPG…QVQAPGTLVV (488 aa)) lie on the Cytoplasmic side of the membrane. An ATP-binding site is contributed by 214–221 (GPPGTGKT). H438 is a binding site for Zn(2+). E439 is an active-site residue. Positions 442 and 515 each coordinate Zn(2+).

In the central section; belongs to the AAA ATPase family. The protein in the C-terminal section; belongs to the peptidase M41 family. Homohexamer. Zn(2+) serves as cofactor.

The protein localises to the cellular thylakoid membrane. Functionally, acts as a processive, ATP-dependent zinc metallopeptidase for both cytoplasmic and membrane proteins. Plays a role in the quality control of integral membrane proteins. The chain is ATP-dependent zinc metalloprotease FtsH 4 from Synechocystis sp. (strain ATCC 27184 / PCC 6803 / Kazusa).